A 424-amino-acid polypeptide reads, in one-letter code: Histidine--tRNA ligase (424 aa).

The protein belongs to the class-II aminoacyl-tRNA synthetase family. Homodimer.

The protein resides in the cytoplasm. The catalysed reaction is tRNA(His) + L-histidine + ATP = L-histidyl-tRNA(His) + AMP + diphosphate + H(+). The sequence is that of Histidine--tRNA ligase from Edwardsiella ictaluri (strain 93-146).